The chain runs to 360 residues: Dihydroorotate dehydrogenase (quinone) (360 aa).

Residues 60 to 64 (AGFDK) and Thr84 contribute to the FMN site. A substrate-binding site is contributed by Lys64. 109–113 (NRMGF) lines the substrate pocket. Residues Asn137 and Asn168 each contribute to the FMN site. Asn168 lines the substrate pocket. The active-site Nucleophile is the Ser171. Substrate is bound at residue Asn173. Residues Lys213 and Ser241 each coordinate FMN. 242–243 (NT) serves as a coordination point for substrate. Residues Gly264, Gly293, and 314-315 (YS) each bind FMN.

This sequence belongs to the dihydroorotate dehydrogenase family. Type 2 subfamily. In terms of assembly, monomer. FMN serves as cofactor.

The protein localises to the cell membrane. It catalyses the reaction (S)-dihydroorotate + a quinone = orotate + a quinol. The protein operates within pyrimidine metabolism; UMP biosynthesis via de novo pathway; orotate from (S)-dihydroorotate (quinone route): step 1/1. Catalyzes the conversion of dihydroorotate to orotate with quinone as electron acceptor. This chain is Dihydroorotate dehydrogenase (quinone), found in Bartonella tribocorum (strain CIP 105476 / IBS 506).